The primary structure comprises 131 residues: CDGSH iron-sulfur domain-containing protein 2 homolog (131 aa).

The Lumenal segment spans residues 1–35 (MQSLSHAVKTSLPNYLSSLPVPDSVGGWFKLSFKD). Residues 36 to 58 (WLALIPPTAVVVGIGYISYQALC) form a helical membrane-spanning segment. Residues 59 to 131 (PAAQRKSCSG…NVGPVVIKRN (73 aa)) lie on the Cytoplasmic side of the membrane. Residues Cys-97, Cys-99, Cys-108, and His-112 each contribute to the [2Fe-2S] cluster site.

The protein belongs to the CISD protein family. CISD2 subfamily. Requires [2Fe-2S] cluster as cofactor.

The protein localises to the endoplasmic reticulum membrane. In Drosophila mojavensis (Fruit fly), this protein is CDGSH iron-sulfur domain-containing protein 2 homolog.